The sequence spans 404 residues: Diaminopropionate ammonia-lyase (404 aa).

Position 78 is an N6-(pyridoxal phosphate)lysine (K78).

This sequence belongs to the diaminopropionate ammonia-lyase family. As to quaternary structure, homodimer. It depends on pyridoxal 5'-phosphate as a cofactor.

It carries out the reaction (S)-2,3-diaminopropanoate + H2O + H(+) = pyruvate + 2 NH4(+). It catalyses the reaction (R)-2,3-diaminopropanoate + H2O + H(+) = pyruvate + 2 NH4(+). Competitively inhibited by L- and D-alanine. Catalyzes the alpha,beta-elimination reaction of both L- and D-alpha,beta-diaminopropionate (DAP) to form pyruvate and ammonia. In vitro L- and D-isomers of serine are also degraded, though slowly; it is the only serine dehydratase which can eliminate an amino group at the beta-carbon position. In vivo L-, D- and a mixure of DL-DAP allow growth. DL-DAP is toxic in the absence of this enzyme, it may inhibit enzymes involved in the synthesis of pyruvate and aspartate, as well as amino acids derived from them. The polypeptide is Diaminopropionate ammonia-lyase (dpaL) (Salmonella typhimurium (strain LT2 / SGSC1412 / ATCC 700720)).